Consider the following 25-residue polypeptide: Caerin-1.7 (25 aa).

At Leu25 the chain carries Leucine amide.

The protein belongs to the frog skin active peptide (FSAP) family. Caerin subfamily. Caerin-1.7.1 does not have any antibacterial activity. As to expression, expressed by the skin dorsal glands.

It is found in the secreted. Its function is as follows. Antibacterial peptide, that adopts an alpha helical conformation which can disrupt bacterial membranes. Each caerin displays a different antimicrobial specificity. The protein is Caerin-1.7 of Ranoidea xanthomera (Northern orange-eyed tree frog).